Reading from the N-terminus, the 93-residue chain is Envelope small membrane protein (93 aa).

Topologically, residues 1-11 (MMNLLNKSLEE) are virion surface. A helical transmembrane segment spans residues 12 to 32 (NGSVLTAFYIFVAFVALYLLG). Residues 33 to 93 (RALQAFVQAA…NEFPKNGWKQ (61 aa)) are Intravirion-facing.

The protein belongs to the gammacoronaviruses E protein family. In terms of assembly, homooligomer. Interacts with the M membrane protein in the budding compartment of the host cell, which is located between endoplasmic reticulum and the Golgi complex. The cytoplasmic tails of both proteins are important for this function. Interacts with Nucleoprotein.

The protein resides in the host Golgi apparatus membrane. Plays a central role in virus morphogenesis and assembly. Acts as a viroporin and self-assembles in host membranes forming pentameric protein-lipid pores that allow ion transport. Also plays a role in the induction of apoptosis. This is Envelope small membrane protein from Avian infectious bronchitis virus (strain Portugal/322/82) (IBV).